Here is a 611-residue protein sequence, read N- to C-terminus: MCGIVGGVSKTDLVPMILEGLQRLEYRGYDSAGLAILGADADLLRVRSVGRVAELTAAVVERGLQGQVGIGHTRWATHGGVRECNAHPMISHEQIAVVHNGIIENFHALRAHLEAAGYTFTSETDTEVIAHLVHHYRQTAPDLFAATRRAVGDLRGAYAIAVISSGDPETVCVARMGCPLLLGVADDGHYFASDVAALLPVTRRVLYLEDGDVAMLQRQTLRITDQAGASRQREEHWSQLSAAAVDLGPYRHFMQKEIHEQPRAVADTLEGALNSQLDLTDLWGDGAAAMFRDVDRVLFLASGTSHYATLVGRQWVESIVGIPAQAELGHEYRYRDSIPDPRQLVVTLSQSGETLDTFEALRRAKDLGHTRTLAICNVAESAIPRASALRFLTRAGPEIGVASTKAFTTQLAALYLLALSLAKAPGASERCAAGGSPGRLRQLPGSVQHALNLEPQIQGWAARFASKDHALFLGRGLHYPIALEGALKLKEISYIHAEAYPAGELKHGPLALVDRDMPVVVIAPNDRLLEKLAANMQEVHARGGELYVFADSDSHFNASAGVHVMRLPRHAGLLSPIVHAIPVQLLAYHAALVKGTDVDRPRNLAKSVTVE.

The active-site Nucleophile; for GATase activity is the Cys-2. A Glutamine amidotransferase type-2 domain is found at 2 to 219 (CGIVGGVSKT…DGDVAMLQRQ (218 aa)). 2 consecutive SIS domains span residues 287–427 (AAAM…APGA) and 460–601 (WAAR…VDRP). Residue Lys-606 is the For Fru-6P isomerization activity of the active site.

In terms of assembly, homodimer.

The protein localises to the cytoplasm. The enzyme catalyses D-fructose 6-phosphate + L-glutamine = D-glucosamine 6-phosphate + L-glutamate. Catalyzes the first step in hexosamine metabolism, converting fructose-6P into glucosamine-6P using glutamine as a nitrogen source. The sequence is that of Glutamine--fructose-6-phosphate aminotransferase [isomerizing] from Acidithiobacillus ferridurans.